Reading from the N-terminus, the 425-residue chain is UPF0597 protein UNCMA_16400 (425 aa).

The protein belongs to the UPF0597 family.

This is UPF0597 protein UNCMA_16400 from Methanocella arvoryzae (strain DSM 22066 / NBRC 105507 / MRE50).